The primary structure comprises 186 residues: Acireductone dioxygenase (186 aa).

Fe(2+)-binding residues include H103, H105, E109, and H147. Ni(2+) is bound by residues H103, H105, E109, and H147.

The protein belongs to the acireductone dioxygenase (ARD) family. In terms of assembly, monomer. Fe(2+) serves as cofactor. Ni(2+) is required as a cofactor.

The enzyme catalyses 1,2-dihydroxy-5-(methylsulfanyl)pent-1-en-3-one + O2 = 3-(methylsulfanyl)propanoate + CO + formate + 2 H(+). It catalyses the reaction 1,2-dihydroxy-5-(methylsulfanyl)pent-1-en-3-one + O2 = 4-methylsulfanyl-2-oxobutanoate + formate + 2 H(+). The protein operates within amino-acid biosynthesis; L-methionine biosynthesis via salvage pathway; L-methionine from S-methyl-5-thio-alpha-D-ribose 1-phosphate: step 5/6. In terms of biological role, catalyzes 2 different reactions between oxygen and the acireductone 1,2-dihydroxy-3-keto-5-methylthiopentene (DHK-MTPene) depending upon the metal bound in the active site. Fe-containing acireductone dioxygenase (Fe-ARD) produces formate and 2-keto-4-methylthiobutyrate (KMTB), the alpha-ketoacid precursor of methionine in the methionine recycle pathway. Ni-containing acireductone dioxygenase (Ni-ARD) produces methylthiopropionate, carbon monoxide and formate, and does not lie on the methionine recycle pathway. The protein is Acireductone dioxygenase of Parasynechococcus marenigrum (strain WH8102).